A 163-amino-acid chain; its full sequence is Large ribosomal subunit protein uL10 (163 aa).

The protein belongs to the universal ribosomal protein uL10 family. In terms of assembly, part of the ribosomal stalk of the 50S ribosomal subunit. The N-terminus interacts with L11 and the large rRNA to form the base of the stalk. The C-terminus forms an elongated spine to which L12 dimers bind in a sequential fashion forming a multimeric L10(L12)X complex.

Forms part of the ribosomal stalk, playing a central role in the interaction of the ribosome with GTP-bound translation factors. This Haemophilus influenzae (strain PittEE) protein is Large ribosomal subunit protein uL10.